A 500-amino-acid polypeptide reads, in one-letter code: Pyridine nucleotide-disulfide oxidoreductase domain-containing protein 1 (500 aa).

Met1 carries the post-translational modification N-acetylmethionine.

It belongs to the class-I pyridine nucleotide-disulfide oxidoreductase family. PYROXD1 subfamily. It depends on FAD as a cofactor.

It is found in the nucleus. Its subcellular location is the cytoplasm. The protein resides in the myofibril. It localises to the sarcomere. Probable FAD-dependent oxidoreductase; involved in the cellular oxidative stress response. Required for normal sarcomere structure and muscle fiber integrity. This is Pyridine nucleotide-disulfide oxidoreductase domain-containing protein 1 (PYROXD1) from Pongo abelii (Sumatran orangutan).